The sequence spans 370 residues: Asporin (370 aa).

The N-terminal stretch at 1 to 15 (MKVYVLLVFLTLCSA) is a signal peptide. Ser-45 carries O-linked (GalNAc...) serine glycosylation. In terms of domain architecture, LRRNT spans 56 to 92 (FFPFDLFSTCPFGCQCYSRVVHCSDLGLSSVPSNIPF). Intrachain disulfides connect Cys-65/Cys-71 and Cys-69/Cys-78. LRR repeat units lie at residues 93-114 (DTRMVDLQNNKIKEIKENDFKG), 117-138 (SLYALILNNNKLTKIHPKAFLT), 141-163 (KLRRLYLSHNQLSEIPLNLPKSL), 164-183 (AELRIHDNKVKKIQKATFKG), 186-209 (ALHVLEMSANPLDNNGIEPGAFEG), 232-253 (TLLELHLDYNKISVVELEDFKR), 256-277 (DLQRLGLGNNRITDIENGSLAN), 280-302 (RVREIHLENNKLKKVPSGLQELK), 303-324 (YLQIIFLHSNSITKVGVNDFCP), 332-354 (SLYSAISLSNNPVKYWEVQPATF), and 355-370 (RCVLSRMSVQLGNFRK). N-linked (GlcNAc...) asparagine glycosylation occurs at Asn-272. A disulfide bridge connects residues Cys-323 and Cys-356.

This sequence belongs to the small leucine-rich proteoglycan (SLRP) family. SLRP class I subfamily.

The protein resides in the secreted. The protein localises to the extracellular space. It is found in the extracellular matrix. This chain is Asporin (ASPN), found in Bos taurus (Bovine).